We begin with the raw amino-acid sequence, 453 residues long: uncharacterized protein (453 aa).

Residues 5–63 (LLKKNQSIELTIEDLTHDGSGVGKIDGYPFFIPNTLPGEKVTAKIIKLNKNYGFARMEN) form the TRAM domain. C76, C82, C85, and C162 together coordinate [4Fe-4S] cluster. Positions 285, 314, 335, and 383 each coordinate S-adenosyl-L-methionine. C410 serves as the catalytic Nucleophile.

It belongs to the class I-like SAM-binding methyltransferase superfamily. RNA M5U methyltransferase family.

This is an uncharacterized protein from Listeria monocytogenes serovar 1/2a (strain ATCC BAA-679 / EGD-e).